The chain runs to 513 residues: Putative ribose/galactose/methyl galactoside import ATP-binding protein 2 (513 aa).

2 consecutive ABC transporter domains span residues 24-260 (LAAD…VGRE) and 270-510 (VPIG…VMDL). 56 to 63 (GENGAGKS) provides a ligand contact to ATP.

The protein belongs to the ABC transporter superfamily. Carbohydrate importer 2 (CUT2) (TC 3.A.1.2) family.

Its subcellular location is the cell inner membrane. It carries out the reaction D-ribose(out) + ATP + H2O = D-ribose(in) + ADP + phosphate + H(+). The enzyme catalyses D-galactose(out) + ATP + H2O = D-galactose(in) + ADP + phosphate + H(+). Its function is as follows. Part of an ABC transporter complex involved in carbohydrate import. Could be involved in ribose, galactose and/or methyl galactoside import. Responsible for energy coupling to the transport system. The polypeptide is Putative ribose/galactose/methyl galactoside import ATP-binding protein 2 (Agrobacterium fabrum (strain C58 / ATCC 33970) (Agrobacterium tumefaciens (strain C58))).